A 198-amino-acid polypeptide reads, in one-letter code: Recombination protein RecR (198 aa).

The C4-type zinc finger occupies 57 to 72 (CPVCFNITDAERCDVC). Residues 80–173 (NLICVVEEPG…VVSRIAYGLP (94 aa)) form the Toprim domain.

Belongs to the RecR family.

In terms of biological role, may play a role in DNA repair. It seems to be involved in an RecBC-independent recombinational process of DNA repair. It may act with RecF and RecO. This is Recombination protein RecR from Deinococcus deserti (strain DSM 17065 / CIP 109153 / LMG 22923 / VCD115).